The sequence spans 1057 residues: Collagen alpha-1(I) chain (1057 aa).

The residue at position 1 (Q1) is a Pyrrolidone carboxylic acid. The span at 1 to 10 shows a compositional bias: basic and acidic residues; that stretch reads QLSYGYDEKS. The segment at 1–17 is nonhelical region (N-terminal); it reads QLSYGYDEKSAGGISVP. Residues 1-1057 form a disordered region; the sequence is QLSYGYDEKS…AHDGGRYYRA (1057 aa). K9 is subject to Allysine. The residue at position 10 (S10) is a Phosphoserine. 4 Collagen-like domains span residues 18-76, 75-134, 135-193, and 195-252; these read GPMG…EAGK, GKPG…PGEN, GAPG…AKGE, and GPQG…GFPG. Residues 18–1031 are triple-helical region; it reads GPMGPSGPRG…PGPPGPPGPP (1014 aa). Residues P29, P32, P35, P44, P47, P50, P65, P80, P86, P95, and P101 each carry the 4-hydroxyproline modification. Over residues 37 to 56 the composition is skewed to low complexity; sequence PQGFQGPPGEPGEPGASGPM. Over residues 68 to 82 the composition is skewed to basic and acidic residues; sequence NGDDGEAGKPGRPGE. K104 bears the 5-hydroxylysine; alternate mark. O-linked (Gal...) hydroxylysine; alternate glycosylation occurs at K104. The residue at position 110 (S110) is a Phosphoserine. Over residues 118 to 134 the composition is skewed to low complexity; sequence DAGPAGPKGEPGSPGEN. Residues P128, P131, P137, P146, and P152 each carry the 4-hydroxyproline modification. Low complexity predominate over residues 157 to 170; it reads PAGARGNDGATGAA. Pro residues predominate over residues 172-184; sequence PPGPTGPAGPPGF. Residues P173, P182, P185, P212, P215, P227, P233, P242, P248, P251, and P266 each carry the 4-hydroxyproline modification. A compositionally biased stretch (low complexity) spans 218-269; that stretch reads AGAAGPAGNPGADGQPGAKGANGAPGIAGAPGFPGARGPAGPQGPSGAPGPK. K269 carries the 5-hydroxylysine modification. A 4-hydroxyproline mark is found at P275, P278, P290, P292, P299, P314, P320, P323, P329, and P335. Low complexity predominate over residues 287 to 296; sequence KGEPGPIGIQ. Positions 324–333 are enriched in gly residues; it reads GERGGPGSRG. Position 344 is a 5-hydroxylysine (K344). A 4-hydroxyproline mark is found at P353, P362, P368, P374, P383, P386, P395, P404, P410, P422, P431, P440, P443, P461, P479, P485, P491, P497, P503, P509, P521, P530, P542, P554, P557, P563, P569, and P578. Residues 377 to 403 show a composition bias toward low complexity; the sequence is KGLTGSPGSPGPDGKTGPPGPAGQDGR. Over residues 412 to 431 the composition is skewed to low complexity; sequence ARGQAGVMGFPGPKGAAGEP. Residues 473–500 show a composition bias toward low complexity; sequence QGPAGSPGFQGLPGPAGPPGEAGKPGEQ. Collagen-like domains lie at 522–579 and 555–613; these read GERG…GLPG and GAPG…PPGP. Over residues 539 to 566 the composition is skewed to low complexity; the sequence is NGAPGNDGAKGDAGAPGAPGSQGAPGLQ. Position 590 is a 5-hydroxylysine (K590). A 4-hydroxyproline mark is found at P596, P611, and P617. Collagen-like domains follow at residues 618–676 and 678–736; these read GDKG…AKGD and GPPG…PPGP. Positions 623 to 637 are enriched in low complexity; it reads AGPSGPAGPTGARGA. The residue at position 626 (S626) is a Phosphoserine. P638, P644, P647, P656, P662, P680, P689, and P698 each carry 4-hydroxyproline. A compositionally biased stretch (low complexity) spans 650–677; the sequence is AGFAGPPGADGQPGAKGEPGDAGAKGDA. A 5-hydroxylysine modification is found at K701. Over residues 706 to 722 the composition is skewed to low complexity; the sequence is SAGPPGATGFPGAAGRV. 2 positions are modified to 4-hydroxyproline: P710 and P716. A 3-hydroxyproline modification is found at P724. A 4-hydroxyproline mark is found at P725, P734, P737, P758, P764, P767, P776, and P785. Over residues 751 to 760 the composition is skewed to low complexity; that stretch reads ETGPAGRPGE. Over residues 770 to 785 the composition is skewed to low complexity; it reads AGEKGSPGADGPAGAP. Residues 789-798 are compositionally biased toward gly residues; that stretch reads GPQGIGGQRG. P803, P812, P815, P821, P836, P842, P848, P857, P863, and P869 each carry 4-hydroxyproline. Residues 804-861 enclose the Collagen-like 9 domain; the sequence is GQRGERGFPGLPGPSGEPGKQGPSGSSGERGPPGPAGPPGLAGPPGESGREGAPGAEG. The span at 835–845 shows a compositional bias: pro residues; sequence PPGPAGPPGLA. 5-hydroxylysine is present on K872. Pro residues predominate over residues 881–896; the sequence is SGPPGAPGAPGAPGPV. P884, P887, and P890 each carry 4-hydroxyproline. Low complexity predominate over residues 917-931; sequence AGPAGVRGPAGPQGP. Collagen-like domains follow at residues 918–976 and 972–1030; these read GPAG…ASGP and GASG…PPGP. Basic and acidic residues predominate over residues 932-946; the sequence is RGDKGETGEQGDRGL. K935 is modified (5-hydroxylysine). K947 is modified (5-hydroxylysine; alternate). The O-linked (Gal...) hydroxylysine; alternate glycan is linked to K947. A 4-hydroxyproline mark is found at P959, P962, P965, P983, P998, and P1001. Residues 965–997 show a composition bias toward low complexity; it reads PGEQGPSGASGPAGPRGPPGSAGAPGKDGLNGL. P1003 carries the post-translational modification 3-hydroxyproline. P1004 carries the 4-hydroxyproline modification. Pro residues predominate over residues 1016–1031; it reads VGPPGPPGPPGPPGPP. Residue P1018 is modified to 3-hydroxyproline. 4-hydroxyproline is present on P1019. P1021 is subject to 3-hydroxyproline. P1022 is modified (4-hydroxyproline). P1024 carries the post-translational modification 3-hydroxyproline. A 4-hydroxyproline mark is found at P1025, P1028, and P1031. Residues 1032 to 1055 are nonhelical region (C-terminal); it reads SGAFDFSFLPQPPQEKAHDGGRYY. Residues 1046 to 1057 show a composition bias toward basic and acidic residues; sequence EKAHDGGRYYRA. Allysine is present on K1047.

Belongs to the fibrillar collagen family. Trimers of one alpha 2(I) and two alpha 1(I) chains. In terms of processing, contains mostly 4-hydroxyproline. Proline residues at the third position of the tripeptide repeating unit (G-X-Y) are hydroxylated in some or all of the chains. Post-translationally, contains 3-hydroxyproline at a few sites. This modification occurs on the first proline residue in the sequence motif Gly-Pro-Hyp, where Hyp is 4-hydroxyproline. Lysine residues at the third position of the tripeptide repeating unit (G-X-Y) are 5-hydroxylated in some or all of the chains. In terms of processing, O-glycosylated on hydroxylated lysine residues. The O-linked glycan consists of a Glc-Gal disaccharide.

Its subcellular location is the secreted. It is found in the extracellular space. The protein localises to the extracellular matrix. Functionally, type I collagen is a member of group I collagen (fibrillar forming collagen). The protein is Collagen alpha-1(I) chain (COL1A1) of Mammut americanum (American mastodon).